We begin with the raw amino-acid sequence, 1463 residues long: DNA polymerase III PolC-type (1463 aa).

Residues 425 to 581 (YVVFDVETTG…YDAEATGRLL (157 aa)) enclose the Exonuclease domain.

It belongs to the DNA polymerase type-C family. PolC subfamily.

It is found in the cytoplasm. It catalyses the reaction DNA(n) + a 2'-deoxyribonucleoside 5'-triphosphate = DNA(n+1) + diphosphate. Its function is as follows. Required for replicative DNA synthesis. This DNA polymerase also exhibits 3' to 5' exonuclease activity. In Streptococcus suis (strain 98HAH33), this protein is DNA polymerase III PolC-type.